The chain runs to 152 residues: Ribonuclease pancreatic beta-type (152 aa).

An N-terminal signal peptide occupies residues methionine 1–serine 25. A disordered region spans residues serine 25–tyrosine 53. Basic and acidic residues predominate over residues glutamate 27–serine 45. The substrate site is built by lysine 35 and arginine 38. The Proton acceptor role is filled by histidine 40. Intrachain disulfides connect cysteine 54–cysteine 112, cysteine 68–cysteine 123, cysteine 86–cysteine 138, and cysteine 93–cysteine 100. Substrate-binding positions include lysine 69–threonine 73 and lysine 94. The active-site Proton donor is histidine 147.

This sequence belongs to the pancreatic ribonuclease family. Monomer.

It localises to the secreted. The enzyme catalyses an [RNA] containing cytidine + H2O = an [RNA]-3'-cytidine-3'-phosphate + a 5'-hydroxy-ribonucleotide-3'-[RNA].. It carries out the reaction an [RNA] containing uridine + H2O = an [RNA]-3'-uridine-3'-phosphate + a 5'-hydroxy-ribonucleotide-3'-[RNA].. Endonuclease that catalyzes the cleavage of RNA on the 3' side of pyrimidine nucleotides. Acts on single-stranded and double-stranded RNA. This chain is Ribonuclease pancreatic beta-type, found in Rattus tiomanicus (Malayan field rat).